A 515-amino-acid chain; its full sequence is 2,3-bisphosphoglycerate-independent phosphoglycerate mutase 1 (515 aa).

Asp-14 and Ser-64 together coordinate Mn(2+). Ser-64 functions as the Phosphoserine intermediate in the catalytic mechanism. Substrate-binding positions include His-125, 155–156 (RD), Arg-187, Arg-193, 264–267 (RADR), and Lys-337. Residues Asp-404, His-408, Asp-445, His-446, and His-464 each contribute to the Mn(2+) site.

It belongs to the BPG-independent phosphoglycerate mutase family. Mn(2+) is required as a cofactor.

It catalyses the reaction (2R)-2-phosphoglycerate = (2R)-3-phosphoglycerate. The protein operates within carbohydrate degradation; glycolysis; pyruvate from D-glyceraldehyde 3-phosphate: step 3/5. In terms of biological role, catalyzes the interconversion of 2-phosphoglycerate and 3-phosphoglycerate. This chain is 2,3-bisphosphoglycerate-independent phosphoglycerate mutase 1, found in Methanosarcina acetivorans (strain ATCC 35395 / DSM 2834 / JCM 12185 / C2A).